The following is a 556-amino-acid chain: MSMLKDPSQKYRPFPAINLPDRTWPSKTITEVPIWCSSDLRDGNQSLIEPMDAAKKMRFFKTLVQVGLKQIEVAFPSASDTDFNFVRELIEGNHIPDDVTIQVLTQAREDLITRTFESLRGAKKAIVHVYNATAPSFRRIVFNQDKQGVVDIATNAAKLIRKLAAEQPDTQWSFQYSPEIFSSTELEFSVEVCNAVIDVWQPTPEHKIILNLPATVECATPNVYADQIEWFGRHVNRRDSVIISLHTHNDRGTGVAATELGLMAGADRVEGCLFGNGERTGNVDLVTLALNMYTQGLHPQLDFSDIDAVRKVVEECNQLPVHPRHPYVGDLVHTAFSGSHQDAIRKGFAQQKEDAIWEVPYLPIDPADIGRDYEAVIRVNSQSGKGGITFLLEQEYGISLPRRMQIEFSQVVQGETDRLGLEMTAQQIYSLLENEYLKATSPYALASHRLQEENGTSAVDLEVTFDGEKQHWRGIGKGPLEALVAALPVKAEIMDYHEHAIGAGANARAAAYIEIRLEGQRPLHGIGIDENITTASFRALFSALNRAVTQAEAKAA.

The Pyruvate carboxyltransferase domain occupies 33–307 (PIWCSSDLRD…HPQLDFSDID (275 aa)). Mg(2+) is bound by residues Asp-42, His-246, His-248, and Asn-282. The tract at residues 439–556 (ATSPYALASH…AVTQAEAKAA (118 aa)) is regulatory domain.

It belongs to the alpha-IPM synthase/homocitrate synthase family. LeuA type 2 subfamily. As to quaternary structure, homodimer. It depends on Mg(2+) as a cofactor.

It is found in the cytoplasm. The catalysed reaction is 3-methyl-2-oxobutanoate + acetyl-CoA + H2O = (2S)-2-isopropylmalate + CoA + H(+). The protein operates within amino-acid biosynthesis; L-leucine biosynthesis; L-leucine from 3-methyl-2-oxobutanoate: step 1/4. Functionally, catalyzes the condensation of the acetyl group of acetyl-CoA with 3-methyl-2-oxobutanoate (2-ketoisovalerate) to form 3-carboxy-3-hydroxy-4-methylpentanoate (2-isopropylmalate). The polypeptide is 2-isopropylmalate synthase (Pseudomonas paraeruginosa (strain DSM 24068 / PA7) (Pseudomonas aeruginosa (strain PA7))).